A 146-amino-acid chain; its full sequence is Hemoglobin subunit beta (146 aa).

The Globin domain occupies 2–146 (HWTAEEKQLI…VAHALARKYH (145 aa)). Residues H63 and H92 each contribute to the heme b site.

This sequence belongs to the globin family. As to quaternary structure, heterotetramer of two alpha chains and two beta chains. Red blood cells.

In terms of biological role, involved in oxygen transport from the lung to the various peripheral tissues. This is Hemoglobin subunit beta (HBB) from Chloephaga melanoptera (Andean goose).